Reading from the N-terminus, the 428-residue chain is Divalent metal cation transporter MntH (428 aa).

The next 11 helical transmembrane spans lie at 33 to 53 (WYLLGPAFVAAIAYVDPGNVA), 60 to 80 (AQFGYLLLWVIVAANVMAALV), 114 to 134 (QAEIVAMATDVAEVIGGAIAL), 136 to 156 (IMFNLPLPIGGIITGVVSLLL), 171 to 191 (VITALLLVIAIGFTASFFVVT), 210 to 230 (SVLLAAAIMGATVMPHAVYLH), 258 to 278 (VGLAMLIAGGVNAAMLLVAAL), 299 to 319 (TLGATIAVLFAVGLLASGLAS), 334 to 356 (LLHWSVPMLVRRLITLGPALAIL), 365 to 385 (TLVLSQVVLSFGIPFAVLPLV), and 406 to 426 (VGWVVAVMVSLLNVMLIYLTV).

This sequence belongs to the NRAMP family.

It localises to the cell membrane. Functionally, h(+)-stimulated, divalent metal cation uptake system. Transports zinc and iron. Can also interact with manganese and copper. This is Divalent metal cation transporter MntH from Mycobacterium tuberculosis (strain CDC 1551 / Oshkosh).